The sequence spans 245 residues: 14-3-3 protein zeta (245 aa).

This sequence belongs to the 14-3-3 family. Homodimer. As to expression, present in all adult tissues examined with the highest levels in the brain.

Its subcellular location is the cytoplasm. Adapter protein implicated in the regulation of a large spectrum of both general and specialized signaling pathways. Binds to a large number of partners, usually by recognition of a phosphoserine or phosphothreonine motif. Binding generally results in the modulation of the activity of the binding partner. The polypeptide is 14-3-3 protein zeta (ywhaz) (Xenopus laevis (African clawed frog)).